Reading from the N-terminus, the 504-residue chain is Lysine--tRNA ligase (504 aa).

2 residues coordinate Mg(2+): E411 and E418.

Belongs to the class-II aminoacyl-tRNA synthetase family. Homodimer. Requires Mg(2+) as cofactor.

The protein resides in the cytoplasm. It catalyses the reaction tRNA(Lys) + L-lysine + ATP = L-lysyl-tRNA(Lys) + AMP + diphosphate. In Clostridium botulinum (strain ATCC 19397 / Type A), this protein is Lysine--tRNA ligase.